A 109-amino-acid chain; its full sequence is Cortistatin (109 aa).

A signal peptide spans 1 to 25 (MMGGRGTGGKWPSAFGLLLLWGVAA). A propeptide spanning residues 26–93 (SALPLESGPT…PPPQQPPHLD (68 aa)) is cleaved from the precursor. Residues 64-97 (ASSSTPVGGGTPGLSKSQERPPPQQPPHLDKKPC) are disordered. C97 and C108 are oxidised to a cystine.

Belongs to the somatostatin family. As to expression, expressed in a subset of GABAergic cells in the cortex and hippocampus.

Its subcellular location is the secreted. This chain is Cortistatin (Cort), found in Mus musculus (Mouse).